The chain runs to 366 residues: MSAPLKRTPLAEEHLAAGARMVDFGGWDMPLAYGSQLEEHHAVRQDAGMFDVSHMLNVDVGGADATAFLRRLVANDVARLATPGRALYSCMLNPQGGIIDDLIIYYFAPDQWRVVVNAGTADKDIAWMQRVAAADGFDVAIAPRRDLAMVAVQGPNARAKVWAARPAWQAASEPLAPFSAAAVEAGTLVARTGYTGEDGFEIVLPADAVVQLWRDLLAQGVRPCGLGARDTLRLEAGMNLYGQDMDELVHPDQAGLSWTVALKDEARRFVGRDAIEQFAVPRAFVGLKLQERGVMRAHMPVRCAQGMGELTSGTMSPTLGVSVGFARVPVGVQPGDAVEVEIRGKWVPALVCKLPFVRHGKAVEHS.

This sequence belongs to the GcvT family. As to quaternary structure, the glycine cleavage system is composed of four proteins: P, T, L and H.

It catalyses the reaction N(6)-[(R)-S(8)-aminomethyldihydrolipoyl]-L-lysyl-[protein] + (6S)-5,6,7,8-tetrahydrofolate = N(6)-[(R)-dihydrolipoyl]-L-lysyl-[protein] + (6R)-5,10-methylene-5,6,7,8-tetrahydrofolate + NH4(+). Functionally, the glycine cleavage system catalyzes the degradation of glycine. The chain is Aminomethyltransferase from Bordetella parapertussis (strain 12822 / ATCC BAA-587 / NCTC 13253).